Consider the following 340-residue polypeptide: Selenide, water dikinase (340 aa).

Cys13 is a catalytic residue. Residues Lys16 and 43–45 (ASD) contribute to the ATP site. Asp46 provides a ligand contact to Mg(2+). ATP is bound by residues Asp63, Asp86, and 133 to 135 (GHS). Asp86 is a binding site for Mg(2+). Asp221 lines the Mg(2+) pocket.

The protein belongs to the selenophosphate synthase 1 family. Class I subfamily. As to quaternary structure, homodimer. Requires Mg(2+) as cofactor.

It catalyses the reaction hydrogenselenide + ATP + H2O = selenophosphate + AMP + phosphate + 2 H(+). Its function is as follows. Synthesizes selenophosphate from selenide and ATP. This is Selenide, water dikinase from Desulfitobacterium hafniense (strain DSM 10664 / DCB-2).